We begin with the raw amino-acid sequence, 165 residues long: Hemolysin, heat labile (165 aa).

A disulfide bridge connects residues Cys151 and Cys161.

The protein belongs to the TDH hemolysin family. Homodimer.

Its function is as follows. Bacterial hemolysins are exotoxins that attack blood cell membranes and cause cell rupture by mechanisms not clearly defined. The chain is Hemolysin, heat labile from Grimontia hollisae (Vibrio hollisae).